Here is a 274-residue protein sequence, read N- to C-terminus: 2-dehydro-3-deoxyphosphooctonate aldolase (274 aa).

Belongs to the KdsA family.

It localises to the cytoplasm. It carries out the reaction D-arabinose 5-phosphate + phosphoenolpyruvate + H2O = 3-deoxy-alpha-D-manno-2-octulosonate-8-phosphate + phosphate. It functions in the pathway carbohydrate biosynthesis; 3-deoxy-D-manno-octulosonate biosynthesis; 3-deoxy-D-manno-octulosonate from D-ribulose 5-phosphate: step 2/3. The protein operates within bacterial outer membrane biogenesis; lipopolysaccharide biosynthesis. This Legionella pneumophila (strain Lens) protein is 2-dehydro-3-deoxyphosphooctonate aldolase.